Here is a 313-residue protein sequence, read N- to C-terminus: Aspartoacylase (313 aa).

The Zn(2+) site is built by histidine 21 and glutamate 24. Residues arginine 63, asparagine 70, and arginine 71 each coordinate N-acetyl-L-aspartate. Histidine 116 provides a ligand contact to Zn(2+). Residues tyrosine 164 and arginine 168 each contribute to the N-acetyl-L-aspartate site. The Proton donor/acceptor role is filled by glutamate 178. Tyrosine 288 contributes to the N-acetyl-L-aspartate binding site.

The protein belongs to the AspA/AstE family. Aspartoacylase subfamily. As to quaternary structure, homodimer. The cofactor is Zn(2+).

Its subcellular location is the cytoplasm. The protein localises to the nucleus. It carries out the reaction an N-acyl-L-aspartate + H2O = a carboxylate + L-aspartate. It catalyses the reaction N-acetyl-L-aspartate + H2O = L-aspartate + acetate. In terms of biological role, catalyzes the deacetylation of N-acetylaspartic acid (NAA) to produce acetate and L-aspartate. NAA occurs in high concentration in brain and its hydrolysis NAA plays a significant part in the maintenance of intact white matter. In other tissues it acts as a scavenger of NAA from body fluids. This chain is Aspartoacylase, found in Pongo abelii (Sumatran orangutan).